The primary structure comprises 2427 residues: Interferon-induced very large GTPase 1 (2427 aa).

Residues 1485 to 1726 enclose the VLIG-type G domain; the sequence is DKRLFVLSVL…KISDFKFRVQ (242 aa). GTP is bound by residues 1495–1502, 1548–1551, and 1625–1628; these read GLQSSGKS, DTEG, and TAKD.

The protein belongs to the TRAFAC class dynamin-like GTPase superfamily. Very large inducible GTPase (VLIG) family. As to expression, widely expressed. Expressed at low basal level in lung, heart, thymus and spleen; at still lower level in liver, ovary, kidney and brain. Expressed at very weak level in testis. Undetectable in embryo.

The protein resides in the cytoplasm. The protein localises to the cytosol. It is found in the nucleus. This chain is Interferon-induced very large GTPase 1 (Gvin1), found in Mus musculus (Mouse).